The chain runs to 195 residues: MMKHLLSIFFIGALLLGNIKTSEGSLSSALETTPGSLLSDLWLDRFPDPFKILERIPLGLERDTSVALSPARVDWKETAEGHEIMLDIPGLKKDEVKIEVEENGVLRVSGERKREEEKKGDQWHRVERSYGKFWRQFKLPDNVDMESVKAKLENGVLTINLTKLSPEKVKGPRVVNIAAEEDQTAKISSSESKEL.

The first 21 residues, 1-21 (MMKHLLSIFFIGALLLGNIKT), serve as a signal peptide directing secretion. Positions 62 to 180 (RDTSVALSPA…GPRVVNIAAE (119 aa)) constitute a sHSP domain. An N-linked (GlcNAc...) asparagine glycan is attached at Asn-160.

This sequence belongs to the small heat shock protein (HSP20) family. May form oligomeric structures.

The protein localises to the endoplasmic reticulum. This Arabidopsis thaliana (Mouse-ear cress) protein is 22.0 kDa heat shock protein (HSP22.0).